The following is a 498-amino-acid chain: Envelop protein OPG153 (498 aa).

The cysteines at positions 43 and 342 are disulfide-linked. A disordered region spans residues 352 to 391; that stretch reads ATDTGHHQDSKINIKDDDVDDDDYNPKPTPIPEPYPRPPF. Positions 355–367 are enriched in basic and acidic residues; sequence TGHHQDSKINIKD. Residues 378–390 show a composition bias toward pro residues; sequence KPTPIPEPYPRPP.

Belongs to the orthopoxvirus OPG153 protein family. Interacts with proteins OPG094 and OPG143. Interacts with OPG154. Interacts with OPG152. Interacts with host laminin.

The protein localises to the virion membrane. Envelop protein that mediates acid-dependent endocytosis into host cells. Plays an important role in endocytic entry of the virus by acting as an acid-sensitive membrane fusion suppressor. Low pH in host endosomes triggers conformational changes to allow de-repression of viral fusion complex activity and membrane fusion within vesicles. Also plays a role in bridging the mature virion with structural protein OPG152. This chain is Envelop protein OPG153 (Protein OPG153), found in Variola virus (isolate Human/India/Ind3/1967) (VARV).